The chain runs to 293 residues: Plant cysteine oxidase 1 (293 aa).

His148, His150, and His211 together coordinate Fe cation. Positions Ser250–Asp293 are disordered. A compositionally biased stretch (acidic residues) spans Glu251–Lys262. Basic and acidic residues predominate over residues Gln269–Thr279.

This sequence belongs to the cysteine dioxygenase family. It depends on Fe(2+) as a cofactor.

The protein localises to the nucleus. It localises to the cytoplasm. The catalysed reaction is L-cysteine + O2 = 3-sulfino-L-alanine + H(+). In terms of biological role, catalyzes the oxidation of N-terminal cysteine residues (N-Cys), thus preparing the protein for N-end rule pathway-mediated proteasomal degradation, upstream of the N-end rule enzymes ATE1, ATE2 and PRT6. Controls the preparation of the group VII ethylene response factor (ERF-VII) proteins for degradation via the 26S proteasome N-end rule pathway. Acts as an oxygen sensor that controls the stability of ERF-VII proteins, which are stabilized in flooding-induced hypoxia, and regulate transcriptional adaptation to these adverse conditions. Not active on Cys located inside or at the C-terminus of a peptide. Acts redundantly with PCO2 to repress the anaerobic response. The sequence is that of Plant cysteine oxidase 1 from Arabidopsis thaliana (Mouse-ear cress).